The following is a 36-amino-acid chain: MTTFDFPSVLVPLVGLVFPAMAMASLSLHVQKNKTV.

Residues 6–28 (FPSVLVPLVGLVFPAMAMASLSL) traverse the membrane as a helical segment.

Belongs to the PsaI family.

Its subcellular location is the plastid. It is found in the chloroplast thylakoid membrane. Functionally, may help in the organization of the PsaL subunit. This is Photosystem I reaction center subunit VIII from Panax ginseng (Korean ginseng).